A 531-amino-acid polypeptide reads, in one-letter code: MRFDVEEFKKRAREDFEHAWHEGPSVLTPAGVSGRYPRLRYTRATPHPIFEIVQRLRETYLAMGFDEAMNPLIVEESDIYRQFGPEAMAVLDRVFYLGGLPRPNVGIARKQLDEIEAILGRAVSPGTEEKLRETLHGYKKGTIDGDELTHELAAVLEADDAAVVHILDAVFPEFRELAPESSRNTLRSHMTSGWFLTLSSLWEKRHLPIRLFSVDRCFRREQEEGPTRLMAYHSASCVVAGEDVTLEEGKAISEALLSAFGFTEFRFQPDEKRSKYYMPETQTEVYARHPVLGWVEVATFGIYSPSALAEYGIGVPVMNLGLGVERLAMIAYQSNDIRQLTHPQFFPQEISDREVAGAVHLREEPRTVAGKRMAEAIRATAAEHATAPGPCAFTAWKGEIAGREVEVIVEEPESNTKLCGPACANEVFVHDGSVLGVPDIEKWATVRQEGVSTGITYLDAVSSLAAARIEEAARCGEEAHVQVKMSKLPSDVNLRIEEYAMRHITDHNKKVDLRGPVFLTVRSVIPEQPTR.

Residues 189–191 (HMT), 234–236 (SAS), 276–277 (YY), and N319 contribute to the substrate site.

This sequence belongs to the class-II aminoacyl-tRNA synthetase family. O-phosphoseryl-tRNA(Cys) synthetase subfamily. As to quaternary structure, homotetramer. Interacts with SepCysS.

The enzyme catalyses tRNA(Cys) + O-phospho-L-serine + ATP = O-phospho-L-seryl-tRNA(Cys) + AMP + diphosphate. Catalyzes the attachment of O-phosphoserine (Sep) to tRNA(Cys). The polypeptide is O-phosphoserine--tRNA(Cys) ligase (Methanoculleus marisnigri (strain ATCC 35101 / DSM 1498 / JR1)).